We begin with the raw amino-acid sequence, 73 residues long: Homeodomain-only protein (73 aa).

The homeobox; degenerate DNA-binding region spans 3–62 (AEPANGPTEDQVEILEYNFNKVNRHPDPTTLCLIAAEAGLSEEETQKWFKQRLAQWRRSE).

Interacts with serum response factor (SRF). Component of a large complex containing histone deacetylases such as HDAC2. Interacts with the acetylated forms of HSPA1A and HSPA1B. Interacts with HSPA8.

Its subcellular location is the nucleus. The protein resides in the cytoplasm. Its function is as follows. Atypical homeodomain protein which does not bind DNA and is required to modulate cardiac growth and development. Acts via its interaction with SRF, thereby modulating the expression of SRF-dependent cardiac-specific genes and cardiac development. Prevents SRF-dependent transcription either by inhibiting SRF binding to DNA or by recruiting histone deacetylase (HDAC) proteins that prevent transcription by SRF. Overexpression causes cardiac hypertrophy. Acts as a co-chaperone for HSPA1A and HSPA1B chaperone proteins and assists in chaperone-mediated protein refolding. The chain is Homeodomain-only protein (HOPX) from Sus scrofa (Pig).